We begin with the raw amino-acid sequence, 233 residues long: MGQKVHPNGIRLGIVKPWNSTWFANTKEFADNLDSDFKVRQYLNKELAKASVSRIVIERPAKSIRVTIHTARPGIVIGKKGEDVEKLRKGVADIAGVPAQINIAEVRKPELDAKLVADSITSQLERRVMFRRAMKRAVQNAMRLGAKGIKVEVSGRLGGAEIARTEWYREGRVPLHTLRADIDYNTSEAHTTYGVIGVKVWIFKGEILGGMAAVEQPEKPAAQPKKQQRKGRK.

Residues 39-107 (VRQYLNKELA…PAQINIAEVR (69 aa)) form the KH type-2 domain.

The protein belongs to the universal ribosomal protein uS3 family. In terms of assembly, part of the 30S ribosomal subunit. Forms a tight complex with proteins S10 and S14.

In terms of biological role, binds the lower part of the 30S subunit head. Binds mRNA in the 70S ribosome, positioning it for translation. The sequence is that of Small ribosomal subunit protein uS3 from Cronobacter sakazakii (strain ATCC BAA-894) (Enterobacter sakazakii).